The chain runs to 334 residues: AA9 family lytic polysaccharide monooxygenase A (334 aa).

Residues 1–22 (MSPSFKSTAILGAVALAARVRA) form the signal peptide. The Cu(2+) site is built by His-23 and His-108. 2 disulfides stabilise this stretch: Cys-78–Cys-200 and Cys-119–Cys-123. Residue Asn-160 is glycosylated (N-linked (GlcNAc...) asparagine). The O2 site is built by His-186 and Gln-195. Tyr-197 contributes to the Cu(2+) binding site. A glycan (N-linked (GlcNAc...) asparagine) is linked at Asn-208. The tract at residues 244–304 (GPALYTGGSS…PSPSLPVEIP (61 aa)) is disordered. The segment covering 249-265 (TGGSSPSPNPPTSTQSP) has biased composition (low complexity).

This sequence belongs to the polysaccharide monooxygenase AA9 family. Requires Cu(2+) as cofactor.

The protein resides in the secreted. The catalysed reaction is [(1-&gt;4)-beta-D-glucosyl]n+m + reduced acceptor + O2 = 4-dehydro-beta-D-glucosyl-[(1-&gt;4)-beta-D-glucosyl]n-1 + [(1-&gt;4)-beta-D-glucosyl]m + acceptor + H2O.. Lytic polysaccharide monooxygenase (LPMO) that depolymerizes crystalline and amorphous polysaccharides via the oxidation of scissile alpha- or beta-(1-4)-glycosidic bonds, yielding C1 or C4 oxidation products. Catalysis by LPMOs requires the reduction of the active-site copper from Cu(II) to Cu(I) by a reducing agent and H(2)O(2) or O(2) as a cosubstrate. Active on hemicelluloses, including xylan, glucomannan, and xyloglucan. Shows clear activity on cellooligosaccharides, generating C4 oxidation products. Also displays activity on konjac glucomannan (KGM), a linear beta-1,4-linked mannan with randomly distributed glucosyl residues; as well as trace activity on lichenan, a linear beta-1,3-beta-1,4-glucan with a 1:2 ratio of beta-1,3 to beta-1,4 linkages. Has no activity on ivory nut mannan (INM), a linear beta-1,4-linked mannan without substitutions. The chain is AA9 family lytic polysaccharide monooxygenase A from Malbranchea cinnamomea (Thermophilic fungus).